A 355-amino-acid polypeptide reads, in one-letter code: UPF0421 protein BCE33L2478 (355 aa).

Helical transmembrane passes span 19-39 (IAVFLTVLVCEFFNIPTIFAV), 74-94 (FTFFLGHQALSYALAAMFTIV), 109-129 (TLTAVAMIPITADHYFTAFLI), and 131-151 (LATTSTGIIVSTVVNFFILPP).

Belongs to the UPF0421 family.

It is found in the cell membrane. The polypeptide is UPF0421 protein BCE33L2478 (Bacillus cereus (strain ZK / E33L)).